The primary structure comprises 316 residues: DNA-directed RNA polymerase subunit alpha (316 aa).

An alpha N-terminal domain (alpha-NTD) region spans residues 1–229 (MLEMEKPRID…EYLKLFTEID (229 aa)). The alpha C-terminal domain (alpha-CTD) stretch occupies residues 246–316 (KDKILEMSIE…LNLSFRKSED (71 aa)).

The protein belongs to the RNA polymerase alpha chain family. In terms of assembly, homodimer. The RNAP catalytic core consists of 2 alpha, 1 beta, 1 beta' and 1 omega subunit. When a sigma factor is associated with the core the holoenzyme is formed, which can initiate transcription.

It carries out the reaction RNA(n) + a ribonucleoside 5'-triphosphate = RNA(n+1) + diphosphate. In terms of biological role, DNA-dependent RNA polymerase catalyzes the transcription of DNA into RNA using the four ribonucleoside triphosphates as substrates. This is DNA-directed RNA polymerase subunit alpha from Syntrophomonas wolfei subsp. wolfei (strain DSM 2245B / Goettingen).